The sequence spans 92 residues: MTRSIKKGPFVDAHLQKKVDEQNEKGTHNVIKTWSRRSMITPDFIGHTFAVHDGRKHVPVFVTESMVGHKLGEFAPTKTFKGHVKDDKKARR.

The protein belongs to the universal ribosomal protein uS19 family.

Protein S19 forms a complex with S13 that binds strongly to the 16S ribosomal RNA. In Bifidobacterium adolescentis (strain ATCC 15703 / DSM 20083 / NCTC 11814 / E194a), this protein is Small ribosomal subunit protein uS19.